We begin with the raw amino-acid sequence, 1081 residues long: uncharacterized protein (1081 aa).

2 coiled-coil regions span residues 18 to 131 and 173 to 242; these read AIEE…FEEN and NHDE…NDDK. A compositionally biased stretch (basic and acidic residues) spans 22–53; that stretch reads NNKNREIQEKRQKETKDRNDRMVQNQKDRKEM. The tract at residues 22-60 is disordered; the sequence is NNKNREIQEKRQKETKDRNDRMVQNQKDRKEMIGLTNEK. Disordered stretches follow at residues 250–321 and 388–1081; these read TDDE…KPGI and QEPK…GNDE. The segment covering 267-283 has biased composition (pro residues); it reads TPTPTPTPTPTPTPTPT. Low complexity-rich tracts occupy residues 284–313 and 396–410; these read PTTTTTTTTTPKPTTTTTTTSTTTPTKTST and NNQSNNNNNNNQAGD. The segment covering 411–421 has biased composition (basic and acidic residues); that stretch reads DQNKNQNRDEN. 6 stretches are compositionally biased toward low complexity: residues 422 to 568, 576 to 602, 614 to 623, 633 to 644, 662 to 672, and 680 to 733; these read NQGG…NNQE, NQDGGENNQDGGENNQDGENNQDGGEN, GENNQDGGEN, DGENNQDGGENN, GENNQDGGENN, and QDGG…NNQD. Composition is skewed to acidic residues over residues 748 to 768, 778 to 832, and 840 to 854; these read GGEDNQDGGEDNQDGGEDNQD, NNQD…DENN, and QDGDENNNQDGDENN. Composition is skewed to low complexity over residues 855-869 and 877-888; these read NQDGGENNQDGGENN and NQDGGENNQDGE. A compositionally biased stretch (acidic residues) spans 889-954; the sequence is NNQDGDENNN…GDENNQDGDE (66 aa). 3 stretches are compositionally biased toward low complexity: residues 955-975, 983-1026, and 1034-1081; these read NNQGNDENNQDGDQNNQGGDE, ENNQ…GGDE, and GENN…GNDE.

This is an uncharacterized protein from Dictyostelium discoideum (Social amoeba).